We begin with the raw amino-acid sequence, 66 residues long: Movement protein TGBp3 (66 aa).

The Lumenal segment spans residues 1 to 2; the sequence is MD. A helical transmembrane segment spans residues 3-23; it reads FTTLIIIGVYLLVFIVYFAKI. Residues 24–66 are Cytoplasmic-facing; that stretch reads NTSVCTISISGASIEISGCDNPTLFEILPKLRPFNHGLSLPSN.

It belongs to the Tymovirales TGBp3 protein family.

It localises to the host endoplasmic reticulum membrane. Functionally, plays a role in viral cell-to-cell propagation, by facilitating genome transport to neighboring plant cells through plasmosdesmata. May induce the formation of granular vesicles derived from the Endoplasmic reticulum, which align on actin filaments. The polypeptide is Movement protein TGBp3 (Trifolium (WCMV)).